We begin with the raw amino-acid sequence, 445 residues long: UPF0210 protein STER_0157 (445 aa).

It belongs to the UPF0210 family. Homodimer.

The chain is UPF0210 protein STER_0157 from Streptococcus thermophilus (strain ATCC BAA-491 / LMD-9).